We begin with the raw amino-acid sequence, 273 residues long: Dermonecrotic toxin LdSicTox-alphaIB1bi (273 aa).

Residue His5 is part of the active site. Mg(2+) is bound by residues Glu25 and Asp27. His41 acts as the Nucleophile in catalysis. 2 cysteine pairs are disulfide-bonded: Cys45-Cys51 and Cys47-Cys190. Asp85 is a binding site for Mg(2+). Asn250 carries N-linked (GlcNAc...) asparagine glycosylation.

This sequence belongs to the arthropod phospholipase D family. Class II subfamily. Mg(2+) serves as cofactor. In terms of tissue distribution, expressed by the venom gland.

It is found in the secreted. The enzyme catalyses an N-(acyl)-sphingosylphosphocholine = an N-(acyl)-sphingosyl-1,3-cyclic phosphate + choline. It catalyses the reaction an N-(acyl)-sphingosylphosphoethanolamine = an N-(acyl)-sphingosyl-1,3-cyclic phosphate + ethanolamine. It carries out the reaction a 1-acyl-sn-glycero-3-phosphocholine = a 1-acyl-sn-glycero-2,3-cyclic phosphate + choline. The catalysed reaction is a 1-acyl-sn-glycero-3-phosphoethanolamine = a 1-acyl-sn-glycero-2,3-cyclic phosphate + ethanolamine. Its function is as follows. Dermonecrotic toxins cleave the phosphodiester linkage between the phosphate and headgroup of certain phospholipids (sphingolipid and lysolipid substrates), forming an alcohol (often choline) and a cyclic phosphate. This toxin acts on sphingomyelin (SM). It may also act on ceramide phosphoethanolamine (CPE), lysophosphatidylcholine (LPC) and lysophosphatidylethanolamine (LPE), but not on lysophosphatidylserine (LPS), and lysophosphatidylglycerol (LPG). It acts by transphosphatidylation, releasing exclusively cyclic phosphate products as second products. Induces dermonecrosis, hemolysis, increased vascular permeability, edema, inflammatory response, and platelet aggregation. This chain is Dermonecrotic toxin LdSicTox-alphaIB1bi, found in Loxosceles deserta (Desert recluse spider).